The primary structure comprises 235 residues: Transmembrane emp24 domain-containing protein 9 (235 aa).

Positions 1 to 37 (MAAVRGVRVVGTSPGLLLGRGMRAFLLLLCLAARGGA) are cleaved as a signal peptide. At 38 to 202 (LYFHIGETEK…RQTSESTNQR (165 aa)) the chain is on the lumenal side. The GOLD domain maps to 47 to 145 (KKCFIEEIPD…MLRVHLDIQV (99 aa)). Residues 121–160 (CLHSNSTKFSLFAGGMLRVHLDIQVGEHANDYAEIAAKDK) are required for interaction with STX17. Residue Asn-125 is glycosylated (N-linked (GlcNAc...) asparagine). The stretch at 154–184 (EIAAKDKLSELQLRVRQLVEQVEQIQKEQNY) forms a coiled coil. At Lys-160 the chain carries N6-acetyllysine. A helical membrane pass occupies residues 203 to 222 (VLWWSILQTLILVAIGVWQM). Residues 223 to 235 (RHLKSFFEAKKLV) are Cytoplasmic-facing. Positions 228-229 (FF) match the COPII vesicle coat-binding motif. The short motif at 228–235 (FFEAKKLV) is the COPI vesicle coat-binding element.

It belongs to the EMP24/GP25L family. As to quaternary structure, monomer and homodimer in endoplasmic reticulum. Predominantly monomeric and to lesser extent homodimeric in endoplasmic reticulum-Golgi intermediate compartment and cis-Golgi network. Probably oligomerizes with other members of the EMP24/GP25L family such as TMED2, TMED7 and TMED10. Interacts with TMED5. Interacts (via C-terminus) with COPG1; the interaction involves dimeric TMED9. Interacts with PTPN2 and SPAST. Interacts with STX17; the interaction is direct. N-linked glycosylated containing high mannose.

It localises to the endoplasmic reticulum membrane. The protein localises to the golgi apparatus. The protein resides in the cis-Golgi network membrane. It is found in the endoplasmic reticulum-Golgi intermediate compartment membrane. Its subcellular location is the trans-Golgi network membrane. Functionally, appears to be involved in vesicular protein trafficking, mainly in the early secretory pathway. In COPI vesicle-mediated retrograde transport involved in the coatomer recruitment to membranes of the early secretory pathway. Increases coatomer-dependent activity of ARFGAP2. Thought to play a crucial role in the specific retention of p24 complexes in cis-Golgi membranes; specifically contributes to the coupled localization of TMED2 and TMED10 in the cis-Golgi network. May be involved in organization of intracellular membranes, such as of the ER-Golgi intermediate compartment and the Golgi apparatus. Involved in ER localization of PTPN2. The polypeptide is Transmembrane emp24 domain-containing protein 9 (Tmed9) (Rattus norvegicus (Rat)).